Here is a 404-residue protein sequence, read N- to C-terminus: 6-hydroxytryptophan 2,3-dioxygenase fscD (404 aa).

Position 341 (H341) interacts with heme b.

It belongs to the indoleamine 2,3-dioxygenase family. Heme serves as cofactor.

The protein operates within secondary metabolite biosynthesis. 6-hydroxytryptophan 2,3-dioxygenase; part of the fragmented gene cluster that mediates the biosynthesis of fusarochromene, a tryptophan-derived metabolite closely related to a group of mycotoxins including fusarochromanone. Within the pathway, fscD is responsible of the cleavage of the pyrrole ring of 6-hydroxytryptophan. The first step of the pathway is the epimerization of L-tryptophan to D-tryptophan in the presence of the NRPS-like tryptophan epimerase fscC. D-tryptophan is subsequently hydroxylated by the tryptophan 6-hydroxylase fscE to yield 6-hydroxytryptophan. The pyrrole ring undergoes cleavaged by the tryptophan 2,3-dioxygenase fscD and is finally converted to 4-hydroxykyrunenine by the hydrolase fscH. The NRPS-like oxidoreductase fscA reduces the carboxyl group to primary alcohol and the DMATS-type prenyltransferase fscG performs prenylation, followed by the formation of a chromene ring catalyzed by the oxidoreductase fscI, which leads to desacetylfusarochromene. Epoxidation by fscF and rearrangement reactions of chromene double bonds convert compound desacetylfusarochromene to fusarochromanones. Although specific acetyltransferases were not found near the fsc gene cluster, several predicted enzymes containing the N-acetyltransferase superfamily domain are present in the genome of F.equiseti. These predicted enzymes may have the potential to convert desacetylfusarochromene to fusarochromene. The chain is 6-hydroxytryptophan 2,3-dioxygenase fscD from Fusarium equiseti (Fusarium scirpi).